The primary structure comprises 481 residues: Xylulose kinase (481 aa).

81–82 lines the substrate pocket; that stretch reads QH. The Proton acceptor role is filled by D239.

Belongs to the FGGY kinase family.

It carries out the reaction D-xylulose + ATP = D-xylulose 5-phosphate + ADP + H(+). Catalyzes the phosphorylation of D-xylulose to D-xylulose 5-phosphate. The chain is Xylulose kinase from Streptomyces coelicolor (strain ATCC BAA-471 / A3(2) / M145).